Reading from the N-terminus, the 236-residue chain is Small ribosomal subunit protein uS2c (236 aa).

The protein belongs to the universal ribosomal protein uS2 family.

Its subcellular location is the plastid. The protein resides in the chloroplast. The protein is Small ribosomal subunit protein uS2c (rps2) of Buxus microphylla (Littleleaf boxwood).